The primary structure comprises 779 residues: Ribosome-releasing factor 2, mitochondrial (779 aa).

The 286-residue stretch at 68-353 (AKIRNIGIMA…AVTTYLPSPE (286 aa)) folds into the tr-type G domain. GTP-binding positions include 77-84 (AHIDAGKT), 141-145 (DTPGH), and 195-198 (NKMD).

The protein belongs to the TRAFAC class translation factor GTPase superfamily. Classic translation factor GTPase family. EF-G/EF-2 subfamily.

The protein localises to the mitochondrion. The catalysed reaction is GTP + H2O = GDP + phosphate + H(+). In terms of biological role, mitochondrial GTPase that mediates the disassembly of ribosomes from messenger RNA at the termination of mitochondrial protein biosynthesis. Acts in collaboration with MRRF. GTP hydrolysis follows the ribosome disassembly and probably occurs on the ribosome large subunit. Not involved in the GTP-dependent ribosomal translocation step during translation elongation. The sequence is that of Ribosome-releasing factor 2, mitochondrial (Gfm2) from Mus musculus (Mouse).